A 205-amino-acid polypeptide reads, in one-letter code: Auxin-responsive protein IAA8 (205 aa).

The tract at residues 1 to 48 is disordered; the sequence is MECMASTEESLPASSSMDSCSGELPTTTTTAPAQSTASSGCRPPATAA. A compositionally biased stretch (polar residues) spans 7-19; that stretch reads TEESLPASSSMDS. The span at 25–39 shows a compositional bias: low complexity; that stretch reads PTTTTTAPAQSTASS. The short motif at 58 to 62 is the EAR-like (transcriptional repression) element; that stretch reads LRLGL. The segment at 71–98 is disordered; it reads DGNNPSTPRSSLTTATVTADRGGGGGGH. Polar residues predominate over residues 73–87; sequence NNPSTPRSSLTTATV. Residues 103–199 form the PB1 domain; the sequence is SLFVKVYMEG…KRLRIARADD (97 aa).

This sequence belongs to the Aux/IAA family. As to quaternary structure, homodimers and heterodimers. As to expression, highly expressed in green shoots. Expressed in flowers.

It is found in the nucleus. Its function is as follows. Aux/IAA proteins are short-lived transcriptional factors that function as repressors of early auxin response genes at low auxin concentrations. The polypeptide is Auxin-responsive protein IAA8 (IAA8) (Oryza sativa subsp. japonica (Rice)).